A 297-amino-acid chain; its full sequence is Esterase LipU (297 aa).

Catalysis depends on residues Ser140, Glu239, and His269.

The protein belongs to the 'GDXG' lipolytic enzyme family.

It localises to the secreted. The catalysed reaction is a fatty acid ester + H2O = an aliphatic alcohol + a fatty acid + H(+). It catalyses the reaction a butanoate ester + H2O = an aliphatic alcohol + butanoate + H(+). It carries out the reaction an acetyl ester + H2O = an aliphatic alcohol + acetate + H(+). The enzyme catalyses decanoate ester + H2O = decanoate + an aliphatic alcohol + H(+). The catalysed reaction is an octanoate ester + H2O = an aliphatic alcohol + octanoate + H(+). It catalyses the reaction a dodecanoate ester + H2O = an aliphatic alcohol + dodecanoate + H(+). It carries out the reaction hexadecanoate ester + H2O = an aliphatic alcohol + hexadecanoate + H(+). Inhibited by the ionic detergent SDS and by the serine protease inhibitor PMSF. Inhibited by the FDA approved drugs Diosmin, Acarbose and Ouabain. These drugs remain bound in the active site pocket and could be probable drug candidates to combat TB disease. Functionally, esterase that shows preference for short chain fatty acids. Contributes to the growth of M.tuberculosis during the nutritive stress. Elicits strong humoral response in both extrapulmonary and relapsed cases of tuberculosis patients. This is Esterase LipU from Mycobacterium tuberculosis (strain ATCC 25618 / H37Rv).